A 39-amino-acid chain; its full sequence is Bacteriocin E50-52 (39 aa).

The protein resides in the secreted. Bacteriocin active against the Gram-negative bacteria C.jejuni, Y.enterocolitica and Y.pseudotuberculosis, and the Gram-positive bacteria S.aureus, S.epidermidis, L.monocytogenes and Listeria spp. When added to the drinking water of chickens, causes a decrease in the levels of C.jejuni and S.enteritidis in the ceca, and in the levels of S.enteritidis in the liver and spleen. The sequence is that of Bacteriocin E50-52 from Enterococcus faecium (Streptococcus faecium).